We begin with the raw amino-acid sequence, 353 residues long: Photosystem II protein D1 (353 aa).

Thr-2 is subject to N-acetylthreonine. Thr-2 bears the Phosphothreonine mark. The next 3 membrane-spanning stretches (helical) occupy residues 29-46, 118-133, and 142-156; these read YIGW…TATS, HFFL…EWEL, and WIAV…AATA. Residue His-118 participates in chlorophyll a binding. Tyr-126 contributes to the pheophytin a binding site. Positions 170 and 189 each coordinate [CaMn4O5] cluster. Residues 197–218 form a helical membrane-spanning segment; the sequence is FHMLGVAGVFGGSLFSAMHGSL. His-198 lines the chlorophyll a pocket. A quinone is bound by residues His-215 and 264-265; that span reads SF. Fe cation is bound at residue His-215. Position 272 (His-272) interacts with Fe cation. The helical transmembrane segment at 274–288 threads the bilayer; that stretch reads FLAAWPVVGIWFTAL. Residues His-332, Glu-333, Asp-342, and Ala-344 each contribute to the [CaMn4O5] cluster site. A propeptide spanning residues 345-353 is cleaved from the precursor; it reads VVEAPAVNG.

Belongs to the reaction center PufL/M/PsbA/D family. PSII is composed of 1 copy each of membrane proteins PsbA, PsbB, PsbC, PsbD, PsbE, PsbF, PsbH, PsbI, PsbJ, PsbK, PsbL, PsbM, PsbT, PsbX, PsbY, PsbZ, Psb30/Ycf12, at least 3 peripheral proteins of the oxygen-evolving complex and a large number of cofactors. It forms dimeric complexes. The D1/D2 heterodimer binds P680, chlorophylls that are the primary electron donor of PSII, and subsequent electron acceptors. It shares a non-heme iron and each subunit binds pheophytin, quinone, additional chlorophylls, carotenoids and lipids. D1 provides most of the ligands for the Mn4-Ca-O5 cluster of the oxygen-evolving complex (OEC). There is also a Cl(-1) ion associated with D1 and D2, which is required for oxygen evolution. The PSII complex binds additional chlorophylls, carotenoids and specific lipids. is required as a cofactor. Tyr-161 forms a radical intermediate that is referred to as redox-active TyrZ, YZ or Y-Z. In terms of processing, C-terminally processed by CTPA; processing is essential to allow assembly of the oxygen-evolving complex and thus photosynthetic growth.

Its subcellular location is the plastid. The protein resides in the chloroplast thylakoid membrane. It catalyses the reaction 2 a plastoquinone + 4 hnu + 2 H2O = 2 a plastoquinol + O2. Its function is as follows. Photosystem II (PSII) is a light-driven water:plastoquinone oxidoreductase that uses light energy to abstract electrons from H(2)O, generating O(2) and a proton gradient subsequently used for ATP formation. It consists of a core antenna complex that captures photons, and an electron transfer chain that converts photonic excitation into a charge separation. The D1/D2 (PsbA/PsbD) reaction center heterodimer binds P680, the primary electron donor of PSII as well as several subsequent electron acceptors. This Chlorella vulgaris (Green alga) protein is Photosystem II protein D1.